A 260-amino-acid polypeptide reads, in one-letter code: Pyridoxine 5'-phosphate synthase (260 aa).

Asn6 contributes to the 3-amino-2-oxopropyl phosphate binding site. Residue 8–9 participates in 1-deoxy-D-xylulose 5-phosphate binding; sequence DH. Residue Arg17 coordinates 3-amino-2-oxopropyl phosphate. Residue His42 is the Proton acceptor of the active site. 2 residues coordinate 1-deoxy-D-xylulose 5-phosphate: Arg44 and His49. Catalysis depends on Glu69, which acts as the Proton acceptor. Position 99 (Thr99) interacts with 1-deoxy-D-xylulose 5-phosphate. His213 (proton donor) is an active-site residue. 3-amino-2-oxopropyl phosphate contacts are provided by residues Gly214 and 235-236; that span reads GQ.

Belongs to the PNP synthase family. As to quaternary structure, homooctamer; tetramer of dimers.

The protein localises to the cytoplasm. The enzyme catalyses 3-amino-2-oxopropyl phosphate + 1-deoxy-D-xylulose 5-phosphate = pyridoxine 5'-phosphate + phosphate + 2 H2O + H(+). It functions in the pathway cofactor biosynthesis; pyridoxine 5'-phosphate biosynthesis; pyridoxine 5'-phosphate from D-erythrose 4-phosphate: step 5/5. In terms of biological role, catalyzes the complicated ring closure reaction between the two acyclic compounds 1-deoxy-D-xylulose-5-phosphate (DXP) and 3-amino-2-oxopropyl phosphate (1-amino-acetone-3-phosphate or AAP) to form pyridoxine 5'-phosphate (PNP) and inorganic phosphate. The sequence is that of Pyridoxine 5'-phosphate synthase from Sulfurimonas denitrificans (strain ATCC 33889 / DSM 1251) (Thiomicrospira denitrificans (strain ATCC 33889 / DSM 1251)).